A 1041-amino-acid polypeptide reads, in one-letter code: Desmoglein-4 (1041 aa).

Residues 1 to 23 (MDWLLFRNICLLILFMVVLGVNS) form the signal peptide. Positions 24–49 (EFIVEVKELDIENGTTTWQTVRRQKR) are excised as a propeptide. Cadherin domains follow at residues 50–157 (EWIK…PPVF), 158–269 (TQNV…FPIL), 270–385 (EKTS…GPTF), and 389–497 (SMTF…CPVI). The Extracellular portion of the chain corresponds to 50-634 (EWIKFAAACR…RQSNVGLGPA (585 aa)). N-linked (GlcNAc...) asparagine glycosylation is present at asparagine 110. N-linked (GlcNAc...) asparagine glycosylation occurs at asparagine 545. Residues 635–655 (GIGMIILGLLLLLLSPLLLLM) traverse the membrane as a helical segment. The Cytoplasmic segment spans residues 656-1041 (CCCKRRQPEG…RYSNMHYSRQ (386 aa)). Desmoglein repeat repeat units follow at residues 884 to 910 (TLSE…IVTE) and 911 to 941 (TYTT…ETVM). The disordered stretch occupies residues 1014-1041 (ISQTTGSTSPMTSQHRVTRYSNMHYSRQ).

Interacts with JUP. In terms of tissue distribution, strongly expressed in the skin; during the anagen stage of hair follicles in the matrix, precortex and inner rooth sheath.

The protein resides in the cell membrane. It localises to the cell junction. The protein localises to the desmosome. Functionally, a component of desmosome cell-cell junctions which are required for positive regulation of cellular adhesion. Coordinates the transition from proliferation to differentiation in hair follicle keratinocytes. Plays a role in moderating lymphocyte migration to inflamed skin and maintaining homeostasis of the epidermal inflammatory response. This chain is Desmoglein-4 (Dsg4), found in Mus musculus (Mouse).